We begin with the raw amino-acid sequence, 83 residues long: Evasin P1124 (83 aa).

An N-terminal signal peptide occupies residues 1-28; sequence MAVNVFTILQLAVFAAIVLNVNLHSVSA. 3 disulfide bridges follow: cysteine 48-cysteine 66, cysteine 52-cysteine 68, and cysteine 62-cysteine 79. A glycan (N-linked (GlcNAc...) asparagine) is linked at asparagine 51.

The protein resides in the secreted. Salivary chemokine-binding protein which binds to host chemokines CXCL1, CXCL2, CXCL3, CXCL5, CXCL6, CXCL12 and CXCL13. The chain is Evasin P1124 from Ixodes ricinus (Common tick).